The primary structure comprises 214 residues: Transcriptional regulatory protein MctR (214 aa).

The region spanning 8 to 124 is the Response regulatory domain; that stretch reads RVLLIDNHPL…EIVSAIETVA (117 aa). Aspartate 59 carries the 4-aspartylphosphate modification. The HTH luxR-type domain occupies 143 to 208; that stretch reads VEEGSDPLTP…GLIRYALDHG (66 aa). Residues 167-186 constitute a DNA-binding region (H-T-H motif); it reads NKEIAETLGITSATAETHRK.

It is found in the cytoplasm. Functionally, member of the two-component regulatory system MctS/MctR, which activates mctP expression. The polypeptide is Transcriptional regulatory protein MctR (Rhizobium johnstonii (strain DSM 114642 / LMG 32736 / 3841) (Rhizobium leguminosarum bv. viciae)).